Reading from the N-terminus, the 275-residue chain is Cis-2,3-dihydrobiphenyl-2,3-diol dehydrogenase (275 aa).

9–33 (LITGGASGLGRALVDRFVAEAKVAV) contacts NAD(+). Serine 140 serves as a coordination point for substrate. The active-site Proton acceptor is the tyrosine 153.

Belongs to the short-chain dehydrogenases/reductases (SDR) family.

It carries out the reaction (2R,3S)-3-phenylcyclohexa-3,5-diene-1,2-diol + NAD(+) = biphenyl-2,3-diol + NADH + H(+). It functions in the pathway xenobiotic degradation; biphenyl degradation; 2-hydroxy-2,4-pentadienoate and benzoate from biphenyl: step 2/4. The sequence is that of Cis-2,3-dihydrobiphenyl-2,3-diol dehydrogenase (bphB) from Metapseudomonas furukawaii (Pseudomonas furukawaii).